A 398-amino-acid polypeptide reads, in one-letter code: S-adenosylmethionine synthase (398 aa).

His-19 contacts ATP. Asp-21 provides a ligand contact to Mg(2+). Glu-47 is a K(+) binding site. Positions 60 and 103 each coordinate L-methionine. The flexible loop stretch occupies residues 103–113 (QSPDIAQGVDV). ATP-binding positions include 177 to 179 (DGK), 243 to 244 (RF), Asp-252, 258 to 259 (RK), Ala-275, and Lys-279. Residue Asp-252 participates in L-methionine binding. Lys-283 is an L-methionine binding site.

The protein belongs to the AdoMet synthase family. Homotetramer; dimer of dimers. Requires Mg(2+) as cofactor. K(+) is required as a cofactor.

It is found in the cytoplasm. The enzyme catalyses L-methionine + ATP + H2O = S-adenosyl-L-methionine + phosphate + diphosphate. It participates in amino-acid biosynthesis; S-adenosyl-L-methionine biosynthesis; S-adenosyl-L-methionine from L-methionine: step 1/1. Its function is as follows. Catalyzes the formation of S-adenosylmethionine (AdoMet) from methionine and ATP. The overall synthetic reaction is composed of two sequential steps, AdoMet formation and the subsequent tripolyphosphate hydrolysis which occurs prior to release of AdoMet from the enzyme. This Symbiobacterium thermophilum (strain DSM 24528 / JCM 14929 / IAM 14863 / T) protein is S-adenosylmethionine synthase.